Reading from the N-terminus, the 300-residue chain is GTP cyclohydrolase FolE2 (300 aa).

It belongs to the GTP cyclohydrolase IV family.

The catalysed reaction is GTP + H2O = 7,8-dihydroneopterin 3'-triphosphate + formate + H(+). The protein operates within cofactor biosynthesis; 7,8-dihydroneopterin triphosphate biosynthesis; 7,8-dihydroneopterin triphosphate from GTP: step 1/1. Converts GTP to 7,8-dihydroneopterin triphosphate. In Bacillus licheniformis (strain ATCC 14580 / DSM 13 / JCM 2505 / CCUG 7422 / NBRC 12200 / NCIMB 9375 / NCTC 10341 / NRRL NRS-1264 / Gibson 46), this protein is GTP cyclohydrolase FolE2.